Consider the following 395-residue polypeptide: Probable beta-1,3-galactosyltransferase 8 (395 aa).

The chain crosses the membrane as a helical; Signal-anchor for type II membrane protein span at residues 5–27 (AASGKAIIVLCLASFLAGSLFMS). An N-linked (GlcNAc...) asparagine glycan is attached at N117.

Belongs to the glycosyltransferase 31 family. Mn(2+) is required as a cofactor.

Its subcellular location is the golgi apparatus membrane. The protein operates within protein modification; protein glycosylation. In terms of biological role, beta-1,3-galactosyltransferase that transfers galactose from UDP-galactose to substrates with a terminal glycosyl residue. The chain is Probable beta-1,3-galactosyltransferase 8 (B3GALT8) from Arabidopsis thaliana (Mouse-ear cress).